We begin with the raw amino-acid sequence, 172 residues long: EPIDERMAL PATTERNING FACTOR-like protein 7 (172 aa).

An N-terminal signal peptide occupies residues 1–27 (MDHVNPTLFHLKSLSIFTLTLLYISSP). 4 cysteine pairs are disulfide-bonded: Cys128–Cys159, Cys132–Cys138, Cys135–Cys161, and Cys147–Cys153.

Belongs to the plant cysteine rich small secretory peptide family. Epidermal patterning factor subfamily.

It localises to the secreted. Controls stomatal patterning. The chain is EPIDERMAL PATTERNING FACTOR-like protein 7 from Arabidopsis thaliana (Mouse-ear cress).